We begin with the raw amino-acid sequence, 438 residues long: GTPase Der (438 aa).

EngA-type G domains are found at residues 3–168 and 179–354; these read PLIA…PCPE and IKLA…INRR. Residues 9-16, 56-60, 120-123, 185-192, 232-236, and 297-300 contribute to the GTP site; these read GRPNVGKS, DTGGY, NKVD, DTAGL, and NKWD. In terms of domain architecture, KH-like spans 355–438; it reads QKISTSNLNR…LPITMRFLRK (84 aa).

The protein belongs to the TRAFAC class TrmE-Era-EngA-EngB-Septin-like GTPase superfamily. EngA (Der) GTPase family. In terms of assembly, associates with the 50S ribosomal subunit.

In terms of biological role, GTPase that plays an essential role in the late steps of ribosome biogenesis. This Chlorobaculum parvum (strain DSM 263 / NCIMB 8327) (Chlorobium vibrioforme subsp. thiosulfatophilum) protein is GTPase Der.